The primary structure comprises 252 residues: Clc-like protein 2 (252 aa).

The next 4 membrane-spanning stretches (helical) occupy residues 7–29 (YAIL…TPAW), 91–111 (LFHI…SFCV), 127–147 (VFLV…AVYS), and 173–193 (IALT…VHVL).

The protein belongs to the Clc family.

It localises to the membrane. The chain is Clc-like protein 2 (clc-2) from Caenorhabditis elegans.